The sequence spans 185 residues: ATP synthase subunit b 1 (185 aa).

The helical transmembrane segment at 4–24 (TLAIALTLATTSPAFAAGGGW) threads the bilayer.

It belongs to the ATPase B chain family. F-type ATPases have 2 components, F(1) - the catalytic core - and F(0) - the membrane proton channel. F(1) has five subunits: alpha(3), beta(3), gamma(1), delta(1), epsilon(1). F(0) has three main subunits: a(1), b(2) and c(10-14). The alpha and beta chains form an alternating ring which encloses part of the gamma chain. F(1) is attached to F(0) by a central stalk formed by the gamma and epsilon chains, while a peripheral stalk is formed by the delta and b chains.

The protein localises to the cell inner membrane. Functionally, f(1)F(0) ATP synthase produces ATP from ADP in the presence of a proton or sodium gradient. F-type ATPases consist of two structural domains, F(1) containing the extramembraneous catalytic core and F(0) containing the membrane proton channel, linked together by a central stalk and a peripheral stalk. During catalysis, ATP synthesis in the catalytic domain of F(1) is coupled via a rotary mechanism of the central stalk subunits to proton translocation. Component of the F(0) channel, it forms part of the peripheral stalk, linking F(1) to F(0). The polypeptide is ATP synthase subunit b 1 (Ruegeria sp. (strain TM1040) (Silicibacter sp.)).